A 134-amino-acid chain; its full sequence is Histone H2A (134 aa).

Residues 1 to 10 are compositionally biased toward gly residues; sequence MTGGKSGGKA. The segment at 1–24 is disordered; that stretch reads MTGGKSGGKASGSKNAQSRSSKAG. N6-acetyllysine occurs at positions 5 and 9. An N5-methylglutamine modification is found at Gln-106. Residues 115-134 form a disordered region; sequence QNLLPKKTPKSGKGPGSQEL. A Phosphoserine modification is found at Ser-131. The short motif at 131-132 is the [ST]-Q motif element; that stretch reads SQ.

The protein belongs to the histone H2A family. As to quaternary structure, the nucleosome is a histone octamer containing two molecules each of H2A, H2B, H3 and H4 assembled in one H3-H4 heterotetramer and two H2A-H2B heterodimers. The octamer wraps approximately 147 bp of DNA. Post-translationally, phosphorylated to form H2AS128ph (gamma-H2A) in response to DNA double-strand breaks (DSBs) generated by exogenous genotoxic agents and by stalled replication forks. Phosphorylation is dependent on the DNA damage checkpoint kinases mec1/ATR and tel1/ATM, spreads on either side of a detected DSB site and may mark the surrounding chromatin for recruitment of proteins required for DNA damage signaling and repair. Gamma-H2A is removed from the DNA prior to the strand invasion-primer extension step of the repair process and subsequently dephosphorylated. Dephosphorylation is necessary for efficient recovery from the DNA damage checkpoint. In terms of processing, acetylated by esa1 to form H2AK4ac and H2AK7ac.

Its subcellular location is the nucleus. The protein resides in the chromosome. Core component of nucleosome which plays a central role in DNA double strand break (DSB) repair. Nucleosomes wrap and compact DNA into chromatin, limiting DNA accessibility to the cellular machineries which require DNA as a template. Histones thereby play a central role in transcription regulation, DNA repair, DNA replication and chromosomal stability. DNA accessibility is regulated via a complex set of post-translational modifications of histones, also called histone code, and nucleosome remodeling. This is Histone H2A (httA) from Aspergillus niger (strain ATCC MYA-4892 / CBS 513.88 / FGSC A1513).